The sequence spans 149 residues: Large ribosomal subunit protein uL15 (149 aa).

A disordered region spans residues Ala14–Lys63. 2 stretches are compositionally biased toward gly residues: residues Arg21 to Asn35 and Ala42 to Gly52.

It belongs to the universal ribosomal protein uL15 family. As to quaternary structure, part of the 50S ribosomal subunit.

In terms of biological role, binds to the 23S rRNA. The chain is Large ribosomal subunit protein uL15 from Nitratidesulfovibrio vulgaris (strain DSM 19637 / Miyazaki F) (Desulfovibrio vulgaris).